The following is a 1368-amino-acid chain: DNA-directed RNA polymerase subunit beta (1368 aa).

The protein belongs to the RNA polymerase beta chain family. The RNAP catalytic core consists of 2 alpha, 1 beta, 1 beta' and 1 omega subunit. When a sigma factor is associated with the core the holoenzyme is formed, which can initiate transcription.

The catalysed reaction is RNA(n) + a ribonucleoside 5'-triphosphate = RNA(n+1) + diphosphate. Its function is as follows. DNA-dependent RNA polymerase catalyzes the transcription of DNA into RNA using the four ribonucleoside triphosphates as substrates. The protein is DNA-directed RNA polymerase subunit beta of Legionella pneumophila (strain Corby).